Reading from the N-terminus, the 777-residue chain is Double zinc ribbon and ankyrin repeat-containing protein 1 (777 aa).

Positions 161 to 176 (QVGERTDPKTLKDLRF) are enriched in basic and acidic residues. A disordered region spans residues 161-202 (QVGERTDPKTLKDLRFSESPLEIPAHSGGSGSRPPTRQSQSP). The segment covering 193-202 (RPPTRQSQSP) has biased composition (polar residues). Ser201 is modified (phosphoserine). DZANK-type zinc fingers lie at residues 230 to 289 (CAHC…CVVC) and 358 to 406 (CSRC…GSCG). ANK repeat units follow at residues 442–473 (NIPLPRSDAGTKRDIGTQTVGLFYPSGKLLAK) and 477–506 (EIASQKQRQEKMSDHKPLLTAISPGRGYWR).

In terms of assembly, interacts with NINL. Associates with DYNC1H1 and multiple dynein intermediate and light chains as well as actin-binding proteins.

The protein resides in the cytoplasm. It localises to the cytoskeleton. The protein localises to the microtubule organizing center. Its subcellular location is the centrosome. It is found in the cilium basal body. Involved in vesicle transport in photoreceptor cells. This chain is Double zinc ribbon and ankyrin repeat-containing protein 1 (DZANK1), found in Macaca fascicularis (Crab-eating macaque).